The chain runs to 130 residues: Cytidine deaminase (130 aa).

The CMP/dCMP-type deaminase domain maps to 3–130 (VNLEWIIKQL…ELLMNGFKKS (128 aa)). 43-45 (NIE) serves as a coordination point for substrate. Cys54 is a binding site for Zn(2+). Glu56 acts as the Proton donor in catalysis. Residues Cys88 and Cys91 each coordinate Zn(2+).

Belongs to the cytidine and deoxycytidylate deaminase family. In terms of assembly, homodimer. Requires Zn(2+) as cofactor.

The catalysed reaction is cytidine + H2O + H(+) = uridine + NH4(+). It carries out the reaction 2'-deoxycytidine + H2O + H(+) = 2'-deoxyuridine + NH4(+). This enzyme scavenges exogenous and endogenous cytidine and 2'-deoxycytidine for UMP synthesis. The polypeptide is Cytidine deaminase (cdd) (Mycoplasma genitalium (strain ATCC 33530 / DSM 19775 / NCTC 10195 / G37) (Mycoplasmoides genitalium)).